Here is a 169-residue protein sequence, read N- to C-terminus: Crossover junction endodeoxyribonuclease RuvC (169 aa).

Catalysis depends on residues aspartate 7, glutamate 67, and aspartate 139. Residues aspartate 7, glutamate 67, and aspartate 139 each contribute to the Mg(2+) site.

Belongs to the RuvC family. As to quaternary structure, homodimer which binds Holliday junction (HJ) DNA. The HJ becomes 2-fold symmetrical on binding to RuvC with unstacked arms; it has a different conformation from HJ DNA in complex with RuvA. In the full resolvosome a probable DNA-RuvA(4)-RuvB(12)-RuvC(2) complex forms which resolves the HJ. It depends on Mg(2+) as a cofactor.

The protein resides in the cytoplasm. It catalyses the reaction Endonucleolytic cleavage at a junction such as a reciprocal single-stranded crossover between two homologous DNA duplexes (Holliday junction).. Functionally, the RuvA-RuvB-RuvC complex processes Holliday junction (HJ) DNA during genetic recombination and DNA repair. Endonuclease that resolves HJ intermediates. Cleaves cruciform DNA by making single-stranded nicks across the HJ at symmetrical positions within the homologous arms, yielding a 5'-phosphate and a 3'-hydroxyl group; requires a central core of homology in the junction. The consensus cleavage sequence is 5'-(A/T)TT(C/G)-3'. Cleavage occurs on the 3'-side of the TT dinucleotide at the point of strand exchange. HJ branch migration catalyzed by RuvA-RuvB allows RuvC to scan DNA until it finds its consensus sequence, where it cleaves and resolves the cruciform DNA. This is Crossover junction endodeoxyribonuclease RuvC from Rhodospirillum rubrum (strain ATCC 11170 / ATH 1.1.1 / DSM 467 / LMG 4362 / NCIMB 8255 / S1).